Consider the following 246-residue polypeptide: DNA repair protein RecO (246 aa).

Belongs to the RecO family.

Its function is as follows. Involved in DNA repair and RecF pathway recombination. This chain is DNA repair protein RecO, found in Pelobacter propionicus (strain DSM 2379 / NBRC 103807 / OttBd1).